The following is a 216-amino-acid chain: Adenylate kinase (216 aa).

An ATP-binding site is contributed by 10–15 (GAGKGT). Positions 30–59 (STGDMLRAAVNAGTEVGKRAKAVMDAGKLV) are NMP. Residues T31, R36, 57-59 (KLV), 85-88 (GFPR), and Q92 contribute to the AMP site. Residues 126–163 (GRYTCAQCGTVYHDTDKVPVEEGVCDKCGSTHFKRRPD) form an LID region. R127 contacts ATP. Positions 130 and 133 each coordinate Zn(2+). An ATP-binding site is contributed by 136-137 (VY). Zn(2+)-binding residues include C150 and C153. Residues R160 and R172 each coordinate AMP. Position 200 (A200) interacts with ATP.

It belongs to the adenylate kinase family. Monomer.

The protein localises to the cytoplasm. The enzyme catalyses AMP + ATP = 2 ADP. Its pathway is purine metabolism; AMP biosynthesis via salvage pathway; AMP from ADP: step 1/1. Its function is as follows. Catalyzes the reversible transfer of the terminal phosphate group between ATP and AMP. Plays an important role in cellular energy homeostasis and in adenine nucleotide metabolism. This chain is Adenylate kinase, found in Rhizobium etli (strain ATCC 51251 / DSM 11541 / JCM 21823 / NBRC 15573 / CFN 42).